The following is a 341-amino-acid chain: Ferrochelatase (341 aa).

Fe cation-binding residues include His-189 and Glu-293.

It belongs to the ferrochelatase family.

The protein localises to the cytoplasm. It carries out the reaction heme b + 2 H(+) = protoporphyrin IX + Fe(2+). Its pathway is porphyrin-containing compound metabolism; protoheme biosynthesis; protoheme from protoporphyrin-IX: step 1/1. Its function is as follows. Catalyzes the ferrous insertion into protoporphyrin IX. In Pseudomonas fluorescens (strain Pf0-1), this protein is Ferrochelatase.